Here is a 450-residue protein sequence, read N- to C-terminus: UDP-N-acetylmuramoylalanine--D-glutamate ligase (450 aa).

119–125 (GSNGKTT) provides a ligand contact to ATP.

The protein belongs to the MurCDEF family.

Its subcellular location is the cytoplasm. The enzyme catalyses UDP-N-acetyl-alpha-D-muramoyl-L-alanine + D-glutamate + ATP = UDP-N-acetyl-alpha-D-muramoyl-L-alanyl-D-glutamate + ADP + phosphate + H(+). Its pathway is cell wall biogenesis; peptidoglycan biosynthesis. Functionally, cell wall formation. Catalyzes the addition of glutamate to the nucleotide precursor UDP-N-acetylmuramoyl-L-alanine (UMA). This is UDP-N-acetylmuramoylalanine--D-glutamate ligase from Bacillus cereus (strain G9842).